A 308-amino-acid polypeptide reads, in one-letter code: tRNA pseudouridine synthase B (308 aa).

The active-site Nucleophile is Asp-44.

It belongs to the pseudouridine synthase TruB family. Type 1 subfamily.

It catalyses the reaction uridine(55) in tRNA = pseudouridine(55) in tRNA. Its function is as follows. Responsible for synthesis of pseudouridine from uracil-55 in the psi GC loop of transfer RNAs. The chain is tRNA pseudouridine synthase B from Nitratidesulfovibrio vulgaris (strain DSM 19637 / Miyazaki F) (Desulfovibrio vulgaris).